The sequence spans 579 residues: Zinc finger protein 248 (579 aa).

The region spanning 8–79 (VSFKDVCVDF…EKGFPSQCHP (72 aa)) is the KRAB domain. The segment at 240–264 (TVCKYNECGRTFIESLKLNISQRPH) adopts a C2H2-type 1; degenerate zinc-finger fold. Lys341 is covalently cross-linked (Glycyl lysine isopeptide (Lys-Gly) (interchain with G-Cter in SUMO2)). 7 C2H2-type zinc fingers span residues 380 to 402 (FECGECGKTFWEKSNLTQHQRTH), 408 to 430 (YECTECGKAFCQKPHLTNHQRTH), 436 to 458 (YECKQCGKTFCVKSNLTEHQRTH), 464 to 486 (YECNACGKSFCHRSALTVHQRTH), 492 to 514 (FICNECGKSFCVKSNLIVHQRTH), 520 to 543 (YKCNECGKTFCEKSALTKHQRTHT), and 548 to 570 (YECNACGKTFSQRSVLTKHQRIH).

This sequence belongs to the krueppel C2H2-type zinc-finger protein family.

It localises to the nucleus. Functionally, may be involved in transcriptional regulation. The chain is Zinc finger protein 248 (ZNF248) from Homo sapiens (Human).